We begin with the raw amino-acid sequence, 359 residues long: Histidinol-phosphate aminotransferase (359 aa).

At lysine 217 the chain carries N6-(pyridoxal phosphate)lysine.

The protein belongs to the class-II pyridoxal-phosphate-dependent aminotransferase family. Histidinol-phosphate aminotransferase subfamily. Homodimer. Pyridoxal 5'-phosphate is required as a cofactor.

The catalysed reaction is L-histidinol phosphate + 2-oxoglutarate = 3-(imidazol-4-yl)-2-oxopropyl phosphate + L-glutamate. Its pathway is amino-acid biosynthesis; L-histidine biosynthesis; L-histidine from 5-phospho-alpha-D-ribose 1-diphosphate: step 7/9. This chain is Histidinol-phosphate aminotransferase (hisC), found in Salmonella typhimurium (strain LT2 / SGSC1412 / ATCC 700720).